The following is a 252-amino-acid chain: 3-deoxy-manno-octulosonate cytidylyltransferase (252 aa).

This sequence belongs to the KdsB family.

The protein localises to the cytoplasm. The enzyme catalyses 3-deoxy-alpha-D-manno-oct-2-ulosonate + CTP = CMP-3-deoxy-beta-D-manno-octulosonate + diphosphate. It participates in nucleotide-sugar biosynthesis; CMP-3-deoxy-D-manno-octulosonate biosynthesis; CMP-3-deoxy-D-manno-octulosonate from 3-deoxy-D-manno-octulosonate and CTP: step 1/1. Its pathway is bacterial outer membrane biogenesis; lipopolysaccharide biosynthesis. Activates KDO (a required 8-carbon sugar) for incorporation into bacterial lipopolysaccharide in Gram-negative bacteria. This Xylella fastidiosa (strain Temecula1 / ATCC 700964) protein is 3-deoxy-manno-octulosonate cytidylyltransferase.